Consider the following 147-residue polypeptide: Ribosome-binding factor A (147 aa).

The tract at residues 122-147 (QQQFGSVDDDVIENDIEESDDTEGKV) is disordered. Positions 128 to 147 (VDDDVIENDIEESDDTEGKV) are enriched in acidic residues.

The protein belongs to the RbfA family. Monomer. Binds 30S ribosomal subunits, but not 50S ribosomal subunits or 70S ribosomes.

Its subcellular location is the cytoplasm. In terms of biological role, one of several proteins that assist in the late maturation steps of the functional core of the 30S ribosomal subunit. Associates with free 30S ribosomal subunits (but not with 30S subunits that are part of 70S ribosomes or polysomes). Required for efficient processing of 16S rRNA. May interact with the 5'-terminal helix region of 16S rRNA. The protein is Ribosome-binding factor A of Shewanella oneidensis (strain ATCC 700550 / JCM 31522 / CIP 106686 / LMG 19005 / NCIMB 14063 / MR-1).